The sequence spans 262 residues: Abhydrolase domain-containing protein AFT2-1 (262 aa).

The Peroxisomal targeting signal type 1 signature appears at 260-262 (SKL).

It belongs to the AB hydrolase superfamily. AKT2 hydrolase family.

It localises to the peroxisome. The protein operates within mycotoxin biosynthesis. Functionally, abhydrolase domain-containing protein; part of the gene clusters that mediate the biosynthesis of the host-selective toxins (HSTs) AF-toxins responsible for Alternaria black spot of strawberry disease by the strawberry pathotype. AF-toxin I and III are valine derivatives of 2,3-dyhydroxy-isovaleric acid and 2-hydroxy-isovaleric acid respectively, while AF II is an isoleucine derivative of 2-hydroxy-valeric acid. These derivatives are bound to a 9,10-epoxy-8-hydroxy-9-methyl-decatrienoic acid (EDA) moiety. On cellular level, AF-toxins affect plasma membrane of susceptible cells and cause a sudden increase in loss of K(+) after a few minutes of toxin treatment. The aldo-keto reductase AFTS1 catalyzes the conversion of 2-keto-isovaleric acid (2-KIV) to 2-hydroxy-isovaleric acid (2-HIV) by reduction of its ketone to an alcohol. The acyl-CoA ligase AFT1, the hydrolase AFT2 and the enoyl-CoA hydratases AFT3 and AFT6, but also the polyketide synthase AFT9, the acyl-CoA dehydrogenase AFT10, the cytochrome P450 monooxygenase AFT11 and the oxidoreductase AFT12 are all involved in the biosynthesis of the AK-, AF- and ACT-toxin common EDA structural moiety. The exact function of each enzyme, and of additional enzymes identified within the AF-toxin clusters have still to be determined. This chain is Abhydrolase domain-containing protein AFT2-1, found in Alternaria alternata (Alternaria rot fungus).